Consider the following 312-residue polypeptide: MHTIDVIDSHTAGEPTRVVLAGFPDLGDGDLAQCRERFRSDFDHWRSAIACEPRGSDTMVGALLLPPRDPSACTGVIFFNNVGYLGMCGHGTIGVVRTLAELGRIAPGQHRIETPVGTVGVALADDGTVSIDNVESYRHAAGVEVDVPGHGRVRGDVAWGGNWFFITEQAPCALGLAQQRELTAYTEAIRLALEAAGITGEAGGEIDHIEISGVAPDGSGAARNFVLCPGLAYDRSPCGTGTSAKLACLAADGKLAEGERWLQQGILGSAFEGSYRHSGRGIAPRISGHAFITARSQLLIDPADPFAWGIVA.

C88 (proton acceptor) is an active-site residue. Substrate-binding positions include 89–90, H208, and D234; that span reads GH. C238 functions as the Proton donor in the catalytic mechanism. 239-240 is a substrate binding site; the sequence is GT.

The protein belongs to the proline racemase family.

It carries out the reaction trans-4-hydroxy-L-proline = cis-4-hydroxy-D-proline. Functionally, catalyzes the epimerization of trans-4-hydroxy-L-proline (t4LHyp) to cis-4-hydroxy-D-proline (c4DHyp). Is likely involved in a degradation pathway that converts t4LHyp to alpha-ketoglutarate. Can also catalyze the epimerization of trans-3-hydroxy-L-proline (t3LHyp) to cis-3-hydroxy-D-proline (c3DHyp), albeit with 500-fold lower efficiency. Displays no proline racemase activity. This is 4-hydroxyproline 2-epimerase from Xanthomonas campestris pv. campestris (strain ATCC 33913 / DSM 3586 / NCPPB 528 / LMG 568 / P 25).